Consider the following 238-residue polypeptide: MATPHINAEMGDFADVVLMPGDPIRAKYIAETFLDDVVQVCDVRNMYGFTGTYKGRKISVMGHGMGIPSCSIYMTELIKDFGVKKVIRVGSCGAVNEGIKVRDVVIGMGACTDSKVNRIRFKDHDFAAIADYEMVRNAELAAQARGIDVKVGNLFSAELFYTPDPSMFDLMDKYGIVGVEMEAAGMYGVAAEYGAKALAICTVSDHIKTGEQTTSDERATTFDEMMLIALDSVLLGDK.

His5 is a binding site for a purine D-ribonucleoside. Phosphate is bound by residues Gly21, Arg25, Arg44, and Arg88 to Ser91. A purine D-ribonucleoside contacts are provided by residues Glu180–Glu182 and Ser204–Asp205. Residue Asp205 is the Proton donor of the active site.

The protein belongs to the PNP/UDP phosphorylase family. As to quaternary structure, homohexamer; trimer of homodimers.

It carries out the reaction a purine D-ribonucleoside + phosphate = a purine nucleobase + alpha-D-ribose 1-phosphate. The enzyme catalyses a purine 2'-deoxy-D-ribonucleoside + phosphate = a purine nucleobase + 2-deoxy-alpha-D-ribose 1-phosphate. Functionally, catalyzes the reversible phosphorolytic breakdown of the N-glycosidic bond in the beta-(deoxy)ribonucleoside molecules, with the formation of the corresponding free purine bases and pentose-1-phosphate. The polypeptide is Purine nucleoside phosphorylase DeoD-type 1 (Aliivibrio fischeri (strain ATCC 700601 / ES114) (Vibrio fischeri)).